The primary structure comprises 292 residues: mRNA export protein 33 (292 aa).

The tract at residues 1-76 is disordered; that stretch reads MPPKKAAKGK…RKRREEEKRA (76 aa). 2 stretches are compositionally biased toward basic and acidic residues: residues 9–26 and 58–76; these read GKGD…KKAA and KDAK…EKRA. The segment at 134-172 adopts a C3H1-type zinc-finger fold; it reads INTDIVCKFFLEACETGKYGWLWQCPNGNMTCIYKHALP.

The protein resides in the cytoplasm. In terms of biological role, functions as a component of the nuclear pore complex (NPC). NPC components, collectively referred to as nucleoporins (NUPs), can play the role of both NPC structural components and of docking or interaction partners for transiently associated nuclear transport factors. Active directional transport is assured by both, a Phe-Gly (FG) repeat affinity gradient for these transport factors across the NPC and a transport cofactor concentration gradient across the nuclear envelope. Involved in the export of mRNA from the nucleus to the cytoplasm. May play a role in mitotic spindle formation and/or function. This chain is mRNA export protein 33 (mep33), found in Schizosaccharomyces pombe (strain 972 / ATCC 24843) (Fission yeast).